The following is a 196-amino-acid chain: GTP cyclohydrolase 1 (196 aa).

Positions 84, 87, and 157 each coordinate Zn(2+).

This sequence belongs to the GTP cyclohydrolase I family. Toroid-shaped homodecamer, composed of two pentamers of five dimers.

It catalyses the reaction GTP + H2O = 7,8-dihydroneopterin 3'-triphosphate + formate + H(+). It functions in the pathway cofactor biosynthesis; 7,8-dihydroneopterin triphosphate biosynthesis; 7,8-dihydroneopterin triphosphate from GTP: step 1/1. In Corynebacterium glutamicum (strain ATCC 13032 / DSM 20300 / JCM 1318 / BCRC 11384 / CCUG 27702 / LMG 3730 / NBRC 12168 / NCIMB 10025 / NRRL B-2784 / 534), this protein is GTP cyclohydrolase 1.